We begin with the raw amino-acid sequence, 545 residues long: Glucose-6-phosphate isomerase (545 aa).

The Proton donor role is filled by Glu351. Residues His382 and Lys510 contribute to the active site.

This sequence belongs to the GPI family.

Its subcellular location is the cytoplasm. It catalyses the reaction alpha-D-glucose 6-phosphate = beta-D-fructose 6-phosphate. The protein operates within carbohydrate biosynthesis; gluconeogenesis. It functions in the pathway carbohydrate degradation; glycolysis; D-glyceraldehyde 3-phosphate and glycerone phosphate from D-glucose: step 2/4. In terms of biological role, catalyzes the reversible isomerization of glucose-6-phosphate to fructose-6-phosphate. In Helicobacter acinonychis (strain Sheeba), this protein is Glucose-6-phosphate isomerase.